The sequence spans 186 residues: Large ribosomal subunit protein uL16 (186 aa).

It belongs to the universal ribosomal protein uL16 family.

The protein is Large ribosomal subunit protein uL16 of Nanoarchaeum equitans (strain Kin4-M).